Consider the following 961-residue polypeptide: MGIAQPGELAPVPRFRHLPFTIPNGIGRDTYLKIHNVMNHLGRAVLVGQHRRLIQALSSDLGVDSLVAMVSISMQDSEVCSAFSVYLTTLEQAYHWPRESTLSTPEQLEDHKLVIQMLQQPELRDTLVASVHAQYDHSATPAQVALSALSIAKQMIDQATETRSNKTKLPTEIQDLVNLLYRTSRGDWFIQGNYTDPDSHKEFGRLHEVIRTNGTQRSVQEIFQRFNGISWLQRMPLLHQNFASNSSILCAAYADLQVAMALARDELFSMVIDEPIWGLTFAKFSKGVGLCTIGAGGADCPMFRMMDALCGRADNINQAALLDELDFRSRFFPPGMRALINDLVTAPSVRSHISSGEASYELTQAFRAMEQIRYDLYEMHRKKAMRIALALRAGQQATSSGVQNATTPEKYIASTLSAAIKVRFGQEPARPQVDAFAWSTPLLCSDTGVIQTSRIQFVFSTPLAVSPGDSLRVAVEVEQGDWHIRTYSITHAYARQGSSKARDQICQAVGSAEICVRSKGQVSSFLCNQKTGFPVRVMIKPAPHFRIAGNTSPHEETLFVAQGGAVCVFLAWLAWQKQLVGTYRLVVGARNYNMLAYVGQLEKISSSFGSHLIVHVVLSRPGHGDIQRFVPGNIKASTGRVTHHLGLFSSCSTKATYVCGSASFALDVVRCLSQGPGTKREVPKVSRLQPIVTSRLPHFRLHVAAATENGTDKPCLNQITKLELALHNSPGDLWIALGDRVFDISQVPSFHPGGEKVLMYRAGRQAQDVFDTVHEGCYMISSLLNEMVIGRLDSARGEFSQWEDYLDKIVEIQNDLTNHSRIEQAPTGSIEQLAESPPVEILRGATNCFVKGWSSLLQQSGIGDSGVVSLLSSHQDAISALDAHVRMVYENDFEDPVRYANALRKIFDAHSRLVCGIHTAIDELKRHIVERLVEGDEPELTSLHISTARISQQLRETSKSY.

An FAD-binding site is contributed by Ala298. The FAD-binding FR-type domain maps to 429–548 (ARPQVDAFAW…IKPAPHFRIA (120 aa)). NADP(+) is bound by residues 453-456 (SRIQ), 499-500 (SK), and Gly753. One can recognise a Cytochrome b5 heme-binding domain in the interval 716–793 (LNQITKLELA…LNEMVIGRLD (78 aa)). Residue 753-755 (GGE) participates in FAD binding.

Belongs to the flavoprotein pyridine nucleotide cytochrome reductase family. FAD is required as a cofactor.

It functions in the pathway secondary metabolite biosynthesis. Its function is as follows. Cytochrome b5-like reductase; part of the gene cluster that mediates the biosynthesis of the cyclic tetrapeptide apicidin F (APF). The non-ribosomal peptide synthetase apf1 incorporates four different amino acids to produce apicidin F: L-phenylalanine, D-pipecolic acid (D-pip), N-methoxy-L-tryptophan and L-2-aminooctanedioic acid. L-Phenylalanine is the only proteinogenic amino acid directly used by apf1. The 3 other apf1 substrates are non-proteinogenic and have to be modified by other enzymes of the cluster. Lysine is converted to delta-1-pyrroline-5-carboxylate (P5C) which is reduced to L-pipecolic acid (L-pip) by apf3. L-pip is epimerized to D-pip, probably by apf1 activity, prior to incorporation. L-Tryptophan is N-oxidyzed by one of the cytochrome P450 monooxygenases (apf7 or apf8), and further methylated at the hydroxy group by the O-methyltransferase apf6 to yield N-methoxy-L-tryptophan. The synthesis of the fourth apf1 substrate is more complex. The fatty acid synthase apf5 is involved in the synthesis of the octanoic acid backbone of L-2-aminooctanedioic acid by fixing one acetyl-CoA unit and three malonyl-CoA units. Then one of the cytochrome P450 monooxygenases (apf7 or apf8) may oxidize this backbone to 2-oxooctanoic acid. The aminotransferase apf4 is predicted to catalyze the exchange of the keto group with an amino group. The next step would be the oxidation of 2-aminooctanoic acid by one of the cytochrome P450 monooxygenases (apf7 or apf8). The last step is the oxidation of 2-amino-8-hydroxyoctanoic acid to 2-aminooctanedioic acid is catalyzed by the FAD-dependent monooxygenase apf9. The chain is Cytochrome b5-like reductase apf12 from Gibberella fujikuroi (strain CBS 195.34 / IMI 58289 / NRRL A-6831) (Bakanae and foot rot disease fungus).